The primary structure comprises 297 residues: Probable E3 SUMO-protein ligase RNF212 (297 aa).

The RING-type zinc-finger motif lies at 7 to 46 (CNRCFQPPHRTSCFSLTNCGHVYCDACLGKGKKNECLICK). Positions 91–124 (RKRLLAFYREKISRLEESLRKSVLQIEQLQSMRS) form a coiled coil.

The protein resides in the nucleus. It is found in the chromosome. The protein operates within protein modification; protein sumoylation. SUMO E3 ligase that acts as a regulator of crossing-over during meiosis: required to couple chromosome synapsis to the formation of crossover-specific recombination complexes. Localizes to recombination sites and stabilizes meiosis-specific recombination factors, such as MutS-gamma complex proteins (MSH4 and MSH5) and TEX11. May mediate sumoylation of target proteins MSH4 and/or MSH5, leading to enhance their binding to recombination sites. Acts as a limiting factor for crossover designation and/or reinforcement and plays an antagonist role with CCNB1IP1/HEI10 in the regulation of meiotic recombination. The sequence is that of Probable E3 SUMO-protein ligase RNF212 (RNF212) from Homo sapiens (Human).